A 276-amino-acid polypeptide reads, in one-letter code: Undecaprenyl-diphosphatase (276 aa).

The next 8 helical transmembrane spans lie at 2 to 22, 43 to 63, 83 to 103, 111 to 131, 147 to 167, 186 to 206, 224 to 244, and 255 to 275; these read LEIL…FLPI, FIDM…VVLY, WTLW…GLPL, LMNW…FIVI, TLPY…LIPG, YVAA…ASLL, LILA…IRFL, and AFGW…ALLA.

It belongs to the UppP family.

It localises to the cell membrane. It catalyses the reaction di-trans,octa-cis-undecaprenyl diphosphate + H2O = di-trans,octa-cis-undecaprenyl phosphate + phosphate + H(+). In terms of biological role, catalyzes the dephosphorylation of undecaprenyl diphosphate (UPP). Confers resistance to bacitracin. The sequence is that of Undecaprenyl-diphosphatase from Limosilactobacillus fermentum (strain NBRC 3956 / LMG 18251) (Lactobacillus fermentum).